Reading from the N-terminus, the 201-residue chain is Lipopolysaccharide core heptose(II)-phosphate phosphatase (201 aa).

The N-terminal stretch at 1 to 35 (MLAFTLRFIKNKRYLATLAGALVIIAGLTSQHAWS) is a signal peptide.

It belongs to the phosphoglycerate mutase family. Ais subfamily.

It localises to the periplasm. It functions in the pathway bacterial outer membrane biogenesis; lipopolysaccharide metabolism. Catalyzes the dephosphorylation of heptose(II) of the outer membrane lipopolysaccharide core. The sequence is that of Lipopolysaccharide core heptose(II)-phosphate phosphatase from Salmonella choleraesuis (strain SC-B67).